Consider the following 160-residue polypeptide: 6,7-dimethyl-8-ribityllumazine synthase (160 aa).

Residues W27, 59 to 61 (AIE), and 81 to 83 (VVI) each bind 5-amino-6-(D-ribitylamino)uracil. A (2S)-2-hydroxy-3-oxobutyl phosphate-binding site is contributed by 86–87 (QT). H89 acts as the Proton donor in catalysis. N114 provides a ligand contact to 5-amino-6-(D-ribitylamino)uracil. (2S)-2-hydroxy-3-oxobutyl phosphate is bound at residue R128.

The protein belongs to the DMRL synthase family. Homopentamer.

The enzyme catalyses (2S)-2-hydroxy-3-oxobutyl phosphate + 5-amino-6-(D-ribitylamino)uracil = 6,7-dimethyl-8-(1-D-ribityl)lumazine + phosphate + 2 H2O + H(+). The protein operates within cofactor biosynthesis; riboflavin biosynthesis; riboflavin from 2-hydroxy-3-oxobutyl phosphate and 5-amino-6-(D-ribitylamino)uracil: step 1/2. Functionally, catalyzes the formation of 6,7-dimethyl-8-ribityllumazine by condensation of 5-amino-6-(D-ribitylamino)uracil with 3,4-dihydroxy-2-butanone 4-phosphate. This is the penultimate step in the biosynthesis of riboflavin. The protein is 6,7-dimethyl-8-ribityllumazine synthase of Mycobacterium avium (strain 104).